The sequence spans 262 residues: Steroid 5-alpha-reductase DET2 (262 aa).

Helical transmembrane passes span 13–33 (CLLT…FLQA), 51–71 (IAWF…FPFG), 79–99 (SLLL…IYPL), 113–133 (FPIT…YIQA), 148–168 (WFWW…YINI), and 205–225 (AIEW…GFFL).

The protein belongs to the steroid 5-alpha reductase family.

It localises to the membrane. The enzyme catalyses a 3-oxo-5alpha-steroid + NADP(+) = a 3-oxo-Delta(4)-steroid + NADPH + H(+). It carries out the reaction 5alpha-campestan-3-one + NADP(+) = campest-4-en-3-one + NADPH + H(+). It catalyses the reaction (22S,24R)-22-hydroxy-5alpha-ergostan-3-one + NADP(+) = (22S)-22-hydroxycampest-4-en-3-one + NADPH + H(+). The catalysed reaction is 3-dehydro-6-deoxoteasterone + NADP(+) = (22R,23R)-22,23-dihydroxycampest-4-en-3-one + NADPH + H(+). It functions in the pathway plant hormone biosynthesis; brassinosteroid biosynthesis. With respect to regulation, inhibited by the 4-azasteroids 4-MA. Functionally, involved in a reduction step in the biosynthesis of the plant steroid, brassinolide (BL); acts at the second step in brassinolide biosynthesis in the 5alpha-reduction of (24R)- 24-methylcholest-4-en-3-one, which is further modified to form campestanol. Can use progesterone, testosterone, androstenedione and campestenone as substrate. Also catalyzes the conversion of campest-4-en-3-one (campesta-4-en-3-one, 4-en-3-one) to campest-3-one (campesta-3-one, 3-one), of (22S,24R)-22-hydroxyergost-4-en-3-one (22-hydroxy-campesta-4-en-3-one, 22-OH-4-en-3-one) to (22S,24R)-22-hydroxy-5alpha-ergostan-3-one (22-hydroxy-campesta-3-one, 22-OH-3-one), and of (22R,23R)-22,23-dihydroxy-5alpha-campestan-3-one (22,23,diOH-4-en-3-one) to (22R,23R)-22,23-dihydroxycampest-4-en-3-one (6-deoxo3DT). Required for the brassinosteroid- (BR) dependent regulation of seed size and shape as well as embryo development. This chain is Steroid 5-alpha-reductase DET2, found in Arabidopsis thaliana (Mouse-ear cress).